The primary structure comprises 145 residues: D-aminoacyl-tRNA deacylase (145 aa).

Positions 137-138 match the Gly-cisPro motif, important for rejection of L-amino acids motif; sequence GP.

It belongs to the DTD family. In terms of assembly, homodimer.

Its subcellular location is the cytoplasm. The catalysed reaction is glycyl-tRNA(Ala) + H2O = tRNA(Ala) + glycine + H(+). It catalyses the reaction a D-aminoacyl-tRNA + H2O = a tRNA + a D-alpha-amino acid + H(+). Functionally, an aminoacyl-tRNA editing enzyme that deacylates mischarged D-aminoacyl-tRNAs. Also deacylates mischarged glycyl-tRNA(Ala), protecting cells against glycine mischarging by AlaRS. Acts via tRNA-based rather than protein-based catalysis; rejects L-amino acids rather than detecting D-amino acids in the active site. By recycling D-aminoacyl-tRNA to D-amino acids and free tRNA molecules, this enzyme counteracts the toxicity associated with the formation of D-aminoacyl-tRNA entities in vivo and helps enforce protein L-homochirality. This is D-aminoacyl-tRNA deacylase from Escherichia coli O139:H28 (strain E24377A / ETEC).